The following is a 568-amino-acid chain: Sphingosine-1-phosphate lyase 1 (568 aa).

The Lumenal segment spans residues 1 to 40 (MPGTDLLKLKDFEPYLEILESYSTKAKNYVNGYCTKYEPW). The helical; Signal-anchor for type III membrane protein transmembrane segment at 41 to 61 (QLIAWSVLCTLLIVWVYELIF) threads the bilayer. The Cytoplasmic segment spans residues 62–568 (QPESLWSRFK…NQMNGSPKPR (507 aa)). Position 353 is an N6-(pyridoxal phosphate)lysine; alternate (Lys353). At Lys353 the chain carries N6-acetyllysine; alternate. 3'-nitrotyrosine is present on residues Tyr356 and Tyr366. Ser564 carries the phosphoserine modification.

Belongs to the group II decarboxylase family. Sphingosine-1-phosphate lyase subfamily. Pyridoxal 5'-phosphate serves as cofactor. In terms of tissue distribution, highest levels are found in liver, small intestine and thymus, followed by kidney, lung, heart, spleen and brain (at protein level). Also detected in stomach, testis and skeletal muscle (at protein level).

The protein resides in the endoplasmic reticulum membrane. The catalysed reaction is sphinganine 1-phosphate = hexadecanal + phosphoethanolamine. The enzyme catalyses sphing-4-enine 1-phosphate = (2E)-hexadecenal + phosphoethanolamine. Its pathway is lipid metabolism; sphingolipid metabolism. Cleaves phosphorylated sphingoid bases (PSBs), such as sphingosine-1-phosphate, into fatty aldehydes and phosphoethanolamine. Elevates stress-induced ceramide production and apoptosis. Required for global lipid homeostasis in liver and cholesterol homeostasis in fibroblasts. Involved in the regulation of pro-inflammatory response and neutrophil trafficking. Modulates neuronal autophagy via phosphoethanolamine production which regulates accumulation of aggregate-prone proteins such as APP. Seems to play a role in establishing neuronal contact sites and axonal maintenance. The chain is Sphingosine-1-phosphate lyase 1 from Mus musculus (Mouse).